Consider the following 741-residue polypeptide: Pentatricopeptide repeat-containing protein At1g08070, chloroplastic (741 aa).

PPR repeat units lie at residues 98–132 (NLLI…GLLP), 133–167 (NSYT…GCDL), 168–202 (DLYV…DVVS), 203–229 (YTAL…IPVK), 230–264 (DVVS…NVRP), 265–299 (DEST…GFGS), 300–330 (NLKI…LPYK), 331–365 (DVIS…GETP), 366–396 (NDVT…IDKR), 403–433 (ASSL…ILHK), 434–468 (SLSS…GIQP), 469–499 (DDIT…MTQD), and 505–535 (KLEH…MEME). Residues 540-615 (IWCSLLKACK…VPGCSSIEID (76 aa)) are type E motif. The segment at 616–646 (SVVHEFIIGDKFHPRNREIYGMLEEMEVLLE) is type E(+) motif. The type DYW motif stretch occupies residues 647-741 (KAGFVPDTSE…DGVCSCNDYW (95 aa)).

It belongs to the PPR family. PCMP-H subfamily. In terms of assembly, interacts with ORRM1. Interacts with VAR3/OZ1.

It localises to the plastid. The protein localises to the chloroplast. Functionally, involved in multiple sites RNA editing events in chloroplasts. Involved in the editing of the site 9 of ndhB (ndhB-9) and site 1 of ndhG (ndhG-1) transcripts, which are two plastid-encoded subunits of the chloroplast NAD(P)H dehydrogenase (NDH) complex. Not essential for the activity of the NDH complex of the photosynthetic electron transport chain. The chain is Pentatricopeptide repeat-containing protein At1g08070, chloroplastic (PCMP-H12) from Arabidopsis thaliana (Mouse-ear cress).